The following is a 69-amino-acid chain: Small ribosomal subunit protein uS14 (69 aa).

Residues Cys33, Cys36, Cys51, and Cys54 each contribute to the Zn(2+) site.

The protein belongs to the universal ribosomal protein uS14 family. Zinc-binding uS14 subfamily. In terms of assembly, part of the 30S ribosomal subunit. Requires Zn(2+) as cofactor.

Functionally, binds 16S rRNA, required for the assembly of 30S particles. This chain is Small ribosomal subunit protein uS14, found in Nanoarchaeum equitans (strain Kin4-M).